A 143-amino-acid chain; its full sequence is Crossover junction endodeoxyribonuclease Hjc (143 aa).

Residue Glu-12 coordinates Mg(2+). Residue Ser-32 is part of the active site. Asp-42 and Glu-55 together coordinate Mg(2+).

Belongs to the Holliday junction resolvase Hjc family. Homodimer. Interacts with PCNA subunit PCNA1. Requires Mg(2+) as cofactor.

It carries out the reaction Endonucleolytic cleavage at a junction such as a reciprocal single-stranded crossover between two homologous DNA duplexes (Holliday junction).. With respect to regulation, autoinhibits at very high concentrations, possibly because of extreme junction distortion. Inhibition (and activity at low concentrations of enzyme) is stimulated by dsDNA and Sso7d. Activity stimulated by PCNA subunit PCNA1. A structure-specific endonuclease that resolves Holliday junction (HJ) intermediates during genetic recombination; may have some degree of sequence preference in a mobile junction. Cleaves 4-way DNA junctions introducing paired nicks in opposing strands, leaving a 5'-terminal phosphate and a 3'-terminal hydroxyl group that are subsequently ligated to produce recombinant products. Can cleave all 4 strands 3 bases 3' of the junction center. Cleaves both mobile and immobile junctions. Modifies the structure of the 4-way DNA junction, a model Holliday junction structure. The protein forms multiple complexes with 4-way DNA, suggesting more than 1 homodimer can bind to each junction. This Saccharolobus solfataricus (strain ATCC 35092 / DSM 1617 / JCM 11322 / P2) (Sulfolobus solfataricus) protein is Crossover junction endodeoxyribonuclease Hjc.